The primary structure comprises 257 residues: NH(3)-dependent NAD(+) synthetase (257 aa).

Residue 28–35 (GISGGVDS) coordinates ATP. Residue Asp34 coordinates Mg(2+). Arg109 serves as a coordination point for deamido-NAD(+). An ATP-binding site is contributed by Thr129. Residue Glu134 coordinates Mg(2+). Lys142 and Asp149 together coordinate deamido-NAD(+). Positions 158 and 180 each coordinate ATP. Position 240-241 (240-241 (HK)) interacts with deamido-NAD(+).

Belongs to the NAD synthetase family. In terms of assembly, homodimer.

The catalysed reaction is deamido-NAD(+) + NH4(+) + ATP = AMP + diphosphate + NAD(+) + H(+). It functions in the pathway cofactor biosynthesis; NAD(+) biosynthesis; NAD(+) from deamido-NAD(+) (ammonia route): step 1/1. In terms of biological role, catalyzes the ATP-dependent amidation of deamido-NAD to form NAD. Uses ammonia as a nitrogen source. This is NH(3)-dependent NAD(+) synthetase from Pyrococcus horikoshii (strain ATCC 700860 / DSM 12428 / JCM 9974 / NBRC 100139 / OT-3).